Here is a 248-residue protein sequence, read N- to C-terminus: Flavodoxin/ferredoxin--NADP reductase (248 aa).

One can recognise an FAD-binding FR-type domain in the interval 2-101 (ADWVTGKVTK…SEAAGFFVLD (100 aa)). D17 provides a ligand contact to NADP(+). FAD contacts are provided by residues 50–53 (RAYS), Y66, 74–76 (KLS), and T116. Residues 143-144 (AR), 173-174 (SR), R184, 214-216 (NPQ), and D220 contribute to the NADP(+) site. An FAD-binding site is contributed by 247-248 (YW).

It belongs to the ferredoxin--NADP reductase type 1 family. As to quaternary structure, monomer. The cofactor is FAD.

It is found in the cytoplasm. The catalysed reaction is 2 reduced [2Fe-2S]-[ferredoxin] + NADP(+) + H(+) = 2 oxidized [2Fe-2S]-[ferredoxin] + NADPH. It carries out the reaction reduced [flavodoxin] + NADP(+) = oxidized [flavodoxin] + NADPH + 2 H(+). Its function is as follows. Transports electrons between flavodoxin or ferredoxin and NADPH. Reduces flavodoxin 1, flavodoxin 2 and ferredoxin, ferredoxin being the kinetically and thermodynamically preferred partner. Required for the activation of several enzymes such as pyruvate formate-lyase, anaerobic ribonucleotide reductase and cobalamin-dependent methionine synthase. The protein is Flavodoxin/ferredoxin--NADP reductase of Escherichia coli (strain K12).